A 543-amino-acid chain; its full sequence is CTP synthase (543 aa).

The segment at 1–265 is amidoligase domain; it reads MTRFIFVTGG…DQIVLDKFGL (265 aa). CTP is bound at residue Ser13. Residue Ser13 participates in UTP binding. ATP contacts are provided by residues 14–19 and Asp71; that span reads SLGKGI. The Mg(2+) site is built by Asp71 and Glu139. Residues 146 to 148, 186 to 191, and Lys222 each bind CTP; these read DIE and KTKPTQ. UTP contacts are provided by residues 186–191 and Lys222; that span reads KTKPTQ. The Glutamine amidotransferase type-1 domain maps to 290-541; that stretch reads TIAMVGKYMD…IQAAVEQNER (252 aa). An L-glutamine-binding site is contributed by Gly351. Cys378 functions as the Nucleophile; for glutamine hydrolysis in the catalytic mechanism. Residues 379-382, Glu402, and Arg469 each bind L-glutamine; that span reads LGMQ. Active-site residues include His514 and Glu516.

It belongs to the CTP synthase family. In terms of assembly, homotetramer.

It carries out the reaction UTP + L-glutamine + ATP + H2O = CTP + L-glutamate + ADP + phosphate + 2 H(+). The enzyme catalyses L-glutamine + H2O = L-glutamate + NH4(+). The catalysed reaction is UTP + NH4(+) + ATP = CTP + ADP + phosphate + 2 H(+). It participates in pyrimidine metabolism; CTP biosynthesis via de novo pathway; CTP from UDP: step 2/2. With respect to regulation, allosterically activated by GTP, when glutamine is the substrate; GTP has no effect on the reaction when ammonia is the substrate. The allosteric effector GTP functions by stabilizing the protein conformation that binds the tetrahedral intermediate(s) formed during glutamine hydrolysis. Inhibited by the product CTP, via allosteric rather than competitive inhibition. Catalyzes the ATP-dependent amination of UTP to CTP with either L-glutamine or ammonia as the source of nitrogen. Regulates intracellular CTP levels through interactions with the four ribonucleotide triphosphates. This is CTP synthase from Saccharophagus degradans (strain 2-40 / ATCC 43961 / DSM 17024).